A 469-amino-acid chain; its full sequence is MAKTLYDKLWDDHTVHVEEDGTTLLYIDRHLLHEVTSPQAFEGLKIAERPVWRISANLAVSDHNVPTTDRSEGIADPVSKLQVDTLDANCDSFGITQFKMNDHRQGIVHVIGPEQGATLPGMTVVCGDSHTSTHGAFGALAHGIGTSEVEHVLATQTLLGKKAKNMLVKVEGKLPRGCTAKDIVLAIIGKIGTAGGTGYTIEFAGSAIRDLTMEGRMTVCNMAIEAGARAGLVAVDNVTLEYVKGRPYAPQGVEWDQAVAYWSTLHSDAGASFDQVIELRAEDIRPQVTWGTSPEMVVSIEDRVPDPEKEKDPTRRNAMERALEYMNLQPNVPMESINVDKVFIGSCTNSRIEDMRAAAWVVQKLGRKVASNVKLAMVVPGSGLVKEQAEREGLDKVFKAAGFEWREPGCSMCLAMNADRLEPGERCASTSNRNFEGRQGAGGRTHLVSPAMAAAAAIEGHFVDIRKLG.

[4Fe-4S] cluster-binding residues include Cys347, Cys410, and Cys413.

Belongs to the aconitase/IPM isomerase family. LeuC type 1 subfamily. In terms of assembly, heterodimer of LeuC and LeuD. It depends on [4Fe-4S] cluster as a cofactor.

The enzyme catalyses (2R,3S)-3-isopropylmalate = (2S)-2-isopropylmalate. It participates in amino-acid biosynthesis; L-leucine biosynthesis; L-leucine from 3-methyl-2-oxobutanoate: step 2/4. Functionally, catalyzes the isomerization between 2-isopropylmalate and 3-isopropylmalate, via the formation of 2-isopropylmaleate. The chain is 3-isopropylmalate dehydratase large subunit from Cupriavidus pinatubonensis (strain JMP 134 / LMG 1197) (Cupriavidus necator (strain JMP 134)).